The primary structure comprises 162 residues: Beta-lactoglobulin-3 (162 aa).

2 disulfide bridges follow: Cys-66–Cys-160 and Cys-106–Cys-119.

Belongs to the calycin superfamily. Lipocalin family. In terms of assembly, monomer.

Its subcellular location is the secreted. Its function is as follows. Lactoglobulin is the primary component of whey, it binds retinol and is probably involved in the transport of that molecule. The protein is Beta-lactoglobulin-3 (LGB3) of Felis catus (Cat).